A 296-amino-acid polypeptide reads, in one-letter code: Cytidine deaminase (296 aa).

2 consecutive CMP/dCMP-type deaminase domains span residues 47 to 167 (AESE…FGPS) and 186 to 296 (DSSD…LDPE). Position 88 to 90 (88 to 90 (NME)) interacts with substrate. Residue H101 coordinates Zn(2+). E103 (proton donor) is an active-site residue. Zn(2+)-binding residues include C128 and C131.

It belongs to the cytidine and deoxycytidylate deaminase family. As to quaternary structure, homodimer. It depends on Zn(2+) as a cofactor.

It carries out the reaction cytidine + H2O + H(+) = uridine + NH4(+). The catalysed reaction is 2'-deoxycytidine + H2O + H(+) = 2'-deoxyuridine + NH4(+). Its function is as follows. This enzyme scavenges exogenous and endogenous cytidine and 2'-deoxycytidine for UMP synthesis. The polypeptide is Cytidine deaminase (Shewanella sediminis (strain HAW-EB3)).